The following is a 215-amino-acid chain: Probable GTP-binding protein EngB (215 aa).

Residues 31–215 enclose the EngB-type G domain; the sequence is GPPEIAFAGR…RTAILQAVVQ (185 aa). GTP contacts are provided by residues 39–46, 66–70, 93–96, 160–163, and 194–196; these read GRSNVGKS, GRTQE, DMPG, TKSD, and TSA. Mg(2+) is bound by residues Ser-46 and Thr-68.

This sequence belongs to the TRAFAC class TrmE-Era-EngA-EngB-Septin-like GTPase superfamily. EngB GTPase family. Mg(2+) serves as cofactor.

Its function is as follows. Necessary for normal cell division and for the maintenance of normal septation. The polypeptide is Probable GTP-binding protein EngB (Bartonella bacilliformis (strain ATCC 35685 / KC583 / Herrer 020/F12,63)).